Consider the following 188-residue polypeptide: Elongation factor P (188 aa).

Belongs to the elongation factor P family.

The protein resides in the cytoplasm. It functions in the pathway protein biosynthesis; polypeptide chain elongation. Functionally, involved in peptide bond synthesis. Stimulates efficient translation and peptide-bond synthesis on native or reconstituted 70S ribosomes in vitro. Probably functions indirectly by altering the affinity of the ribosome for aminoacyl-tRNA, thus increasing their reactivity as acceptors for peptidyl transferase. The polypeptide is Elongation factor P (Streptomyces avermitilis (strain ATCC 31267 / DSM 46492 / JCM 5070 / NBRC 14893 / NCIMB 12804 / NRRL 8165 / MA-4680)).